Reading from the N-terminus, the 346-residue chain is MEDLQLVLFVLGAIAIVAVLVHGFWSIRRQQPKSLKDSPMGNFYKKQAERGEGAPKRVDADGFDADGIGAVRVRKANEAHTPEAPAFNPYLKQEAKTQPQPVEPVQVEPKPLFEQEPSMAQPDFSLQSPTAKEQHRGPKASRQEPVLQGHSANLAQAHVGQSHAAMVAQKVAEEQRAQVQMPTQTALFDDEEPYEEEQSQAVEQADDDLGEPRDVLVLHVVAKEGQQLNGAELLPCFLTLNFKYGDMNIFHRHVDNAGNGKVLFSIANMVKPGIFDPDNMEQFSTQGVVFFMTLPCYGDALMNFSIMLNSARQLADDIDAVVLDGQRQPWGEFTKQDYLHRIRANA.

Residues 1-6 (MEDLQL) lie on the Periplasmic side of the membrane. The chain crosses the membrane as a helical span at residues 7-27 (VLFVLGAIAIVAVLVHGFWSI). Residues 28 to 346 (RRQQPKSLKD…DYLHRIRANA (319 aa)) lie on the Cytoplasmic side of the membrane. Disordered regions lie at residues 76 to 103 (ANEA…QPVE) and 121 to 145 (QPDF…RQEP).

This sequence belongs to the ZipA family. In terms of assembly, interacts with FtsZ via their C-terminal domains.

It is found in the cell inner membrane. Its function is as follows. Essential cell division protein that stabilizes the FtsZ protofilaments by cross-linking them and that serves as a cytoplasmic membrane anchor for the Z ring. Also required for the recruitment to the septal ring of downstream cell division proteins. The protein is Cell division protein ZipA of Shewanella sp. (strain MR-7).